The primary structure comprises 365 residues: Peptide chain release factor 2 (365 aa).

The residue at position 252 (Gln252) is an N5-methylglutamine.

Belongs to the prokaryotic/mitochondrial release factor family. In terms of processing, methylated by PrmC. Methylation increases the termination efficiency of RF2.

The protein resides in the cytoplasm. In terms of biological role, peptide chain release factor 2 directs the termination of translation in response to the peptide chain termination codons UGA and UAA. The protein is Peptide chain release factor 2 of Yersinia enterocolitica serotype O:8 / biotype 1B (strain NCTC 13174 / 8081).